The following is a 1866-amino-acid chain: Nucleoporin Nup188 (1866 aa).

The protein belongs to the Nup188 family. Part of the nuclear pore complex (NPC).

The protein resides in the nucleus. The protein localises to the nuclear pore complex. In terms of biological role, component of the nuclear pore complex (NPC), a complex required for the trafficking across the nuclear envelope. Required for proper protein transport into the nucleus. This chain is Nucleoporin Nup188, found in Drosophila melanogaster (Fruit fly).